The chain runs to 339 residues: Ketol-acid reductoisomerase (NADP(+)) (339 aa).

The KARI N-terminal Rossmann domain occupies 1–182; it reads MRVYYDRDAD…GGGRAGIIET (182 aa). NADP(+) contacts are provided by residues 24 to 27, arginine 48, serine 51, serine 53, and 83 to 86; these read YGSQ and DELQ. Residue histidine 108 is part of the active site. Glycine 134 serves as a coordination point for NADP(+). The region spanning 183–328 is the KARI C-terminal knotted domain; sequence TFKEECETDL…ERLRGMMPWI (146 aa). Mg(2+)-binding residues include aspartate 191, glutamate 195, glutamate 227, and glutamate 231. Serine 252 lines the substrate pocket.

The protein belongs to the ketol-acid reductoisomerase family. It depends on Mg(2+) as a cofactor.

The enzyme catalyses (2R)-2,3-dihydroxy-3-methylbutanoate + NADP(+) = (2S)-2-acetolactate + NADPH + H(+). The catalysed reaction is (2R,3R)-2,3-dihydroxy-3-methylpentanoate + NADP(+) = (S)-2-ethyl-2-hydroxy-3-oxobutanoate + NADPH + H(+). It participates in amino-acid biosynthesis; L-isoleucine biosynthesis; L-isoleucine from 2-oxobutanoate: step 2/4. It functions in the pathway amino-acid biosynthesis; L-valine biosynthesis; L-valine from pyruvate: step 2/4. Involved in the biosynthesis of branched-chain amino acids (BCAA). Catalyzes an alkyl-migration followed by a ketol-acid reduction of (S)-2-acetolactate (S2AL) to yield (R)-2,3-dihydroxy-isovalerate. In the isomerase reaction, S2AL is rearranged via a Mg-dependent methyl migration to produce 3-hydroxy-3-methyl-2-ketobutyrate (HMKB). In the reductase reaction, this 2-ketoacid undergoes a metal-dependent reduction by NADPH to yield (R)-2,3-dihydroxy-isovalerate. The chain is Ketol-acid reductoisomerase (NADP(+)) from Methylobacterium sp. (strain 4-46).